Reading from the N-terminus, the 121-residue chain is Two-component response regulator ORR8 (121 aa).

Residues 5-121 (HVLVVDDTHV…VDVPRIMKYI (117 aa)) form the Response regulatory domain. D55 carries the post-translational modification 4-aspartylphosphate.

Belongs to the ARR family. Type-A subfamily. In terms of processing, two-component system major event consists of a His-to-Asp phosphorelay between a sensor histidine kinase (HK) and a response regulator (RR). In plants, the His-to-Asp phosphorelay involves an additional intermediate named Histidine-containing phosphotransfer protein (HPt). This multistep phosphorelay consists of a His-Asp-His-Asp sequential transfer of a phosphate group between first a His and an Asp of the HK protein, followed by the transfer to a conserved His of the HPt protein and finally the transfer to an Asp in the receiver domain of the RR protein. Expressed in mature leaves, and at low levels in roots, shoots and flowers.

In terms of biological role, functions as a response regulator involved in His-to-Asp phosphorelay signal transduction system. Phosphorylation of the Asp residue in the receiver domain activates the ability of the protein to promote the transcription of target genes. Type-A response regulators seem to act as negative regulators of the cytokinin signaling. The sequence is that of Two-component response regulator ORR8 from Oryza sativa subsp. indica (Rice).